We begin with the raw amino-acid sequence, 213 residues long: Uridine kinase (213 aa).

Residue 15–22 coordinates ATP; it reads GASASGKS.

Belongs to the uridine kinase family.

The protein resides in the cytoplasm. The catalysed reaction is uridine + ATP = UMP + ADP + H(+). The enzyme catalyses cytidine + ATP = CMP + ADP + H(+). The protein operates within pyrimidine metabolism; CTP biosynthesis via salvage pathway; CTP from cytidine: step 1/3. It functions in the pathway pyrimidine metabolism; UMP biosynthesis via salvage pathway; UMP from uridine: step 1/1. This chain is Uridine kinase, found in Pectobacterium atrosepticum (strain SCRI 1043 / ATCC BAA-672) (Erwinia carotovora subsp. atroseptica).